Reading from the N-terminus, the 311-residue chain is Small ribosomal subunit biogenesis GTPase RsgA (311 aa).

The CP-type G domain maps to 77-239 (LSKQSHIIAT…IIDTPGIKGF (163 aa)). GTP is bound by residues 126-129 (NKTD) and 180-188 (GHSGVGKST). Zn(2+) is bound by residues C263, C268, H270, and C276.

The protein belongs to the TRAFAC class YlqF/YawG GTPase family. RsgA subfamily. In terms of assembly, monomer. Associates with 30S ribosomal subunit, binds 16S rRNA. The cofactor is Zn(2+).

It is found in the cytoplasm. Its function is as follows. One of several proteins that assist in the late maturation steps of the functional core of the 30S ribosomal subunit. Helps release RbfA from mature subunits. May play a role in the assembly of ribosomal proteins into the subunit. Circularly permuted GTPase that catalyzes slow GTP hydrolysis, GTPase activity is stimulated by the 30S ribosomal subunit. The chain is Small ribosomal subunit biogenesis GTPase RsgA from Azobacteroides pseudotrichonymphae genomovar. CFP2.